The sequence spans 144 residues: Cytochrome c oxidase subunit 4 isoform 1, mitochondrial (144 aa).

At 1 to 73 (SVVKSEDFSL…SFAEMNRGSN (73 aa)) the chain is on the mitochondrial matrix side. The residue at position 4 (Lys-4) is an N6-acetyllysine; alternate. Lys-4 bears the N6-succinyllysine; alternate mark. At Lys-28 the chain carries N6-acetyllysine. Residues Ser-31 and Ser-33 each carry the phosphoserine modification. Lys-35 is subject to N6-acetyllysine; alternate. Residue Lys-35 is modified to N6-succinyllysine; alternate. Residue Lys-42 is modified to N6-acetyllysine. Residues 74 to 99 (EWKTVVGGAMFFIGFTALVIMWQKHY) form a helical membrane-spanning segment. The Mitochondrial intermembrane portion of the chain corresponds to 100–144 (VYGPLPQSFDKEWVAKQTKRMLDMKVNPIQGLASKWDYEKNEWKK).

This sequence belongs to the cytochrome c oxidase IV family. In terms of assembly, component of the cytochrome c oxidase (complex IV, CIV), a multisubunit enzyme composed of 14 subunits. The complex is composed of a catalytic core of 3 subunits MT-CO1, MT-CO2 and MT-CO3, encoded in the mitochondrial DNA, and 11 supernumerary subunits COX4I, COX5A, COX5B, COX6A, COX6B, COX6C, COX7A, COX7B, COX7C, COX8 and NDUFA4, which are encoded in the nuclear genome. The complex exists as a monomer or a dimer and forms supercomplexes (SCs) in the inner mitochondrial membrane with NADH-ubiquinone oxidoreductase (complex I, CI) and ubiquinol-cytochrome c oxidoreductase (cytochrome b-c1 complex, complex III, CIII), resulting in different assemblies (supercomplex SCI(1)III(2)IV(1) and megacomplex MCI(2)III(2)IV(2)). Interacts with PHB2; the interaction decreases in absence of SPHK2. Interacts with AFG1L. Interacts with ABCB7; this interaction allows the regulation of cellular iron homeostasis and cellular reactive oxygen species (ROS) levels in cardiomyocytes. Interacts with FLVCR2; this interaction occurs in the absence of heme and is disrupted upon heme binding. Interacts with IRGC.

The protein resides in the mitochondrion inner membrane. The protein operates within energy metabolism; oxidative phosphorylation. In terms of biological role, component of the cytochrome c oxidase, the last enzyme in the mitochondrial electron transport chain which drives oxidative phosphorylation. The respiratory chain contains 3 multisubunit complexes succinate dehydrogenase (complex II, CII), ubiquinol-cytochrome c oxidoreductase (cytochrome b-c1 complex, complex III, CIII) and cytochrome c oxidase (complex IV, CIV), that cooperate to transfer electrons derived from NADH and succinate to molecular oxygen, creating an electrochemical gradient over the inner membrane that drives transmembrane transport and the ATP synthase. Cytochrome c oxidase is the component of the respiratory chain that catalyzes the reduction of oxygen to water. Electrons originating from reduced cytochrome c in the intermembrane space (IMS) are transferred via the dinuclear copper A center (CU(A)) of subunit 2 and heme A of subunit 1 to the active site in subunit 1, a binuclear center (BNC) formed by heme A3 and copper B (CU(B)). The BNC reduces molecular oxygen to 2 water molecules using 4 electrons from cytochrome c in the IMS and 4 protons from the mitochondrial matrix. This Pan troglodytes (Chimpanzee) protein is Cytochrome c oxidase subunit 4 isoform 1, mitochondrial (COX4I1).